The primary structure comprises 717 residues: F-box only protein 42 (717 aa).

The span at M1 to E30 shows a compositional bias: acidic residues. Positions M1–P34 are disordered. The region spanning N44–F93 is the F-box domain. 4 Kelch repeats span residues S132–D184, L186–D242, M244–D293, and T295–H342. The tract at residues R361–Y474 is disordered. Low complexity predominate over residues P363–S376. S365 and S373 each carry phosphoserine. T378 bears the Phosphothreonine mark. Composition is skewed to polar residues over residues Q416–G426 and S455–S469. S552 carries the post-translational modification Phosphoserine. Residues G570–G596 are compositionally biased toward low complexity. The interval G570–V631 is disordered.

In terms of assembly, component of some SCF complex, composed of CUL1, SKP1, RBX1 and FBXO42. Interacts (via the kelch domain) with p53/TP53; interaction is direct.

Its function is as follows. Substrate-recognition component of some SCF (SKP1-CUL1-F-box protein)-type E3 ubiquitin ligase complex. Specifically recognizes p53/TP53, promoting its ubiquitination and degradation. In Homo sapiens (Human), this protein is F-box only protein 42 (FBXO42).